Here is a 188-residue protein sequence, read N- to C-terminus: Elongation factor P (188 aa).

The protein belongs to the elongation factor P family.

It localises to the cytoplasm. The protein operates within protein biosynthesis; polypeptide chain elongation. In terms of biological role, involved in peptide bond synthesis. Stimulates efficient translation and peptide-bond synthesis on native or reconstituted 70S ribosomes in vitro. Probably functions indirectly by altering the affinity of the ribosome for aminoacyl-tRNA, thus increasing their reactivity as acceptors for peptidyl transferase. The protein is Elongation factor P of Caulobacter sp. (strain K31).